A 396-amino-acid polypeptide reads, in one-letter code: Phosphoglycerate kinase (396 aa).

Substrate-binding positions include D20 to N22, R35, H58 to R61, R115, and R155. ATP contacts are provided by residues E328 and G353–T356.

Belongs to the phosphoglycerate kinase family. As to quaternary structure, monomer.

The protein localises to the cytoplasm. It catalyses the reaction (2R)-3-phosphoglycerate + ATP = (2R)-3-phospho-glyceroyl phosphate + ADP. It participates in carbohydrate degradation; glycolysis; pyruvate from D-glyceraldehyde 3-phosphate: step 2/5. In Natronomonas pharaonis (strain ATCC 35678 / DSM 2160 / CIP 103997 / JCM 8858 / NBRC 14720 / NCIMB 2260 / Gabara) (Halobacterium pharaonis), this protein is Phosphoglycerate kinase.